We begin with the raw amino-acid sequence, 492 residues long: High-affinity nickel transport protein (492 aa).

Over 1 to 24 (MLSRWTRRVNESRLAQRKLTLLGR) the chain is Cytoplasmic. A helical membrane pass occupies residues 25-45 (AIALVVGELLFNAVCWIAAGI). Over 46-50 (CFGKT) the chain is Extracellular. A helical transmembrane segment spans residues 51–71 (DGILGLALLAWTIGLRHGLDA). The Cytoplasmic segment spans residues 72–94 (DHISAIDNATRQLVSQGQLPITC). The helical transmembrane segment at 95–115 (GLFFSLGHSTIVIVVNVAIAV) threads the bilayer. The Extracellular segment spans residues 116 to 136 (SVDIYDKLDRVGSIGGIVGAA). Residues 137 to 157 (VSASFLFLIACLNIYFLVGAI) traverse the membrane as a helical segment. The Cytoplasmic segment spans residues 158–210 (KQRRSMKRRQALGLPPDEDEGDPSKIYGGGCMVRVVGPILRAVDRPWKMYPVG). A helical membrane pass occupies residues 211–231 (VLFGFGFDTASSIALLAISAI). Over 232-239 (AQRGPNGD) the chain is Extracellular. Residues 240–260 (AISHGKIVILPFLFTAGMSLV) traverse the membrane as a helical segment. Residues 261 to 382 (DSLDSILMLY…AKANTMSSLS (122 aa)) are Cytoplasmic-facing. A helical membrane pass occupies residues 383 to 403 (IILTLLSILVALSISLIEIMG). The Extracellular portion of the chain corresponds to 404–439 (LIGDNCTQCQDAANDPDGGGLAGSWWRAWARANDQS). N408 carries N-linked (GlcNAc...) asparagine glycosylation. A helical transmembrane segment spans residues 440 to 460 (GYIGAAIVGCFAAILAGWYGA). The Cytoplasmic portion of the chain corresponds to 461–492 (KWGKKKWKARRDANAAIVLEDNEDDAAETPVA).

The protein belongs to the NiCoT transporter (TC 2.A.52) family.

It is found in the cell membrane. High-affinity nickel-specific transporter responsible for nickel uptake and required for high levels of activity of urease URE1. Does not transport cobalt. Plays a role in host brain invasion. In Cryptococcus neoformans var. grubii serotype A (strain H99 / ATCC 208821 / CBS 10515 / FGSC 9487) (Filobasidiella neoformans var. grubii), this protein is High-affinity nickel transport protein.